The chain runs to 392 residues: NADH-quinone oxidoreductase subunit D (392 aa).

It belongs to the complex I 49 kDa subunit family. As to quaternary structure, NDH-1 is composed of 14 different subunits. Subunits NuoB, C, D, E, F, and G constitute the peripheral sector of the complex.

Its subcellular location is the cell inner membrane. It carries out the reaction a quinone + NADH + 5 H(+)(in) = a quinol + NAD(+) + 4 H(+)(out). NDH-1 shuttles electrons from NADH, via FMN and iron-sulfur (Fe-S) centers, to quinones in the respiratory chain. The immediate electron acceptor for the enzyme in this species is believed to be ubiquinone. Couples the redox reaction to proton translocation (for every two electrons transferred, four hydrogen ions are translocated across the cytoplasmic membrane), and thus conserves the redox energy in a proton gradient. In Parvibaculum lavamentivorans (strain DS-1 / DSM 13023 / NCIMB 13966), this protein is NADH-quinone oxidoreductase subunit D.